A 186-amino-acid chain; its full sequence is Ribosome-recycling factor (186 aa).

Positions Glu-144–Lys-163 are disordered.

Belongs to the RRF family.

The protein resides in the cytoplasm. Responsible for the release of ribosomes from messenger RNA at the termination of protein biosynthesis. May increase the efficiency of translation by recycling ribosomes from one round of translation to another. This chain is Ribosome-recycling factor, found in Rhizobium johnstonii (strain DSM 114642 / LMG 32736 / 3841) (Rhizobium leguminosarum bv. viciae).